A 455-amino-acid chain; its full sequence is MLDINLIRNNPELVKNDLKKRGELDKIAWIDEILRLDEEWRKKLKEINRLRHERNKIAIEIGKRKKAGEPVEDLLAKSKEIVKRIEELEKEVEELRKRIDYYLWRLPNITHPSVPVGKDENDNVPIRFWGKAKVWKGHLESFLEQSQGKMEYEVLEWRPKLHVDLLEILGGADFARAAKVSGSRFYYLLNEIVILDLALIRFALDRLIEKGFTPVIPPYMVRRFVEEGSTTFEDFEDVIYKVEGEDLYLIPTAEHPLAGMHANEILDGKDLPLLYVAFSPCFRKEAGTAGKDTKGIFRVHQFHKVEQFVYSRPEESWEWHERLVRNAEELFQELEIPYRVVNICTGDLGYVAAKKYDIEAWMPGQGRFREVVSASNCTDWQARRLNIRFRDRTDEKPRYVHTLNSTAIATSRAIVAILENHQQEDGTVKIPRALWKYTGFKEIVPVEKKEGCCKA.

252-254 (TAE) serves as a coordination point for L-serine. Residues 283–285 (RKE) and V299 each bind ATP. E306 lines the L-serine pocket. ATP is bound at residue 370 to 373 (EVVS). T406 is an L-serine binding site.

The protein belongs to the class-II aminoacyl-tRNA synthetase family. Type-1 seryl-tRNA synthetase subfamily. As to quaternary structure, homodimer. The tRNA molecule binds across the dimer.

Its subcellular location is the cytoplasm. The catalysed reaction is tRNA(Ser) + L-serine + ATP = L-seryl-tRNA(Ser) + AMP + diphosphate + H(+). It carries out the reaction tRNA(Sec) + L-serine + ATP = L-seryl-tRNA(Sec) + AMP + diphosphate + H(+). It functions in the pathway aminoacyl-tRNA biosynthesis; selenocysteinyl-tRNA(Sec) biosynthesis; L-seryl-tRNA(Sec) from L-serine and tRNA(Sec): step 1/1. In terms of biological role, catalyzes the attachment of serine to tRNA(Ser). Is also able to aminoacylate tRNA(Sec) with serine, to form the misacylated tRNA L-seryl-tRNA(Sec), which will be further converted into selenocysteinyl-tRNA(Sec). The polypeptide is Serine--tRNA ligase (Pyrococcus furiosus (strain ATCC 43587 / DSM 3638 / JCM 8422 / Vc1)).